We begin with the raw amino-acid sequence, 592 residues long: MCGIVGYVGRDLALPIVLGALERLEYRGYDSAGVALIEDGKLIVEKKKGKIRELVKALWGKDYKAKTGIGHTRWATHGKPTDENAHPHTDEKGEFAVVHNGIIENYLELKEELKKEGVKFRSETDTEVIAHLIAKNYRGDLLEAVLKTVKKLKGAFAFAVITVHEPNRLIGVKQGSPLIVGLGEGENFLASDIPAILPYTKKIIVLDDGEIADLTPDTVNIYNFEGEPVSKEVMITPWDLVSAEKGGFKHFMLKEIYEQPKAINDTLKGFLSTEDAIPFKLKDFRRVLIIACGTSYHAGFVGKYWIERFAGVPTEVIYASEFRYADVPVSDKDIVIGISQSGETADTKFALQSAKEKGAFTVGLVNVVGSAIDRESDFSLHTHAGPEIGVAATKTFTAQLTALYALSVRESEERENLIRLLEKVPSLVEQTLNTAEEVEKVAEKYMKKKNMLYLGRYLNYPIALEGALKLKEISYIHAEGYPAGEMKHGPIALIDENMPVVVIAPKDRVYEKILSNVEEVLARKGRVISVGFKGDETLKSKSESVMEIPKAEEPITPFLTVIPLQLFAYFIASKLGLDVDQPRNLAKTVTVE.

The active-site Nucleophile; for GATase activity is Cys-2. The Glutamine amidotransferase type-2 domain maps to 2–217 (CGIVGYVGRD…DGEIADLTPD (216 aa)). SIS domains are found at residues 277-416 (IPFK…EREN) and 441-582 (VAEK…VDQP). The active-site For Fru-6P isomerization activity is the Lys-587.

As to quaternary structure, homodimer.

The protein localises to the cytoplasm. The enzyme catalyses D-fructose 6-phosphate + L-glutamine = D-glucosamine 6-phosphate + L-glutamate. Catalyzes the first step in hexosamine metabolism, converting fructose-6P into glucosamine-6P using glutamine as a nitrogen source. This is Glutamine--fructose-6-phosphate aminotransferase [isomerizing] from Aquifex aeolicus (strain VF5).